Here is a 385-residue protein sequence, read N- to C-terminus: Alanine--glyoxylate aminotransferase 1 (385 aa).

Position 201 is an N6-(pyridoxal phosphate)lysine (K201). Substrate is bound at residue R354.

It belongs to the class-V pyridoxal-phosphate-dependent aminotransferase family. In terms of assembly, homodimer. The cofactor is pyridoxal 5'-phosphate.

The enzyme catalyses glyoxylate + L-alanine = glycine + pyruvate. Its pathway is amino-acid biosynthesis; glycine biosynthesis; glycine from glyoxylate: step 1/1. In terms of biological role, has alanine:glyoxylate aminotransferase activity. The chain is Alanine--glyoxylate aminotransferase 1 from Saccharomyces cerevisiae (strain ATCC 204508 / S288c) (Baker's yeast).